Here is a 283-residue protein sequence, read N- to C-terminus: Pantothenate synthetase (283 aa).

ATP is bound at residue 34–41 (MGALHDGH). His-41 acts as the Proton donor in catalysis. (R)-pantoate is bound at residue Gln-65. Position 65 (Gln-65) interacts with beta-alanine. 152–155 (GSKD) contributes to the ATP binding site. Gln-158 contacts (R)-pantoate. ATP-binding positions include Val-181 and 189–192 (MSSR).

This sequence belongs to the pantothenate synthetase family. In terms of assembly, homodimer.

Its subcellular location is the cytoplasm. The enzyme catalyses (R)-pantoate + beta-alanine + ATP = (R)-pantothenate + AMP + diphosphate + H(+). The protein operates within cofactor biosynthesis; (R)-pantothenate biosynthesis; (R)-pantothenate from (R)-pantoate and beta-alanine: step 1/1. Functionally, catalyzes the condensation of pantoate with beta-alanine in an ATP-dependent reaction via a pantoyl-adenylate intermediate. The polypeptide is Pantothenate synthetase (Rhodopseudomonas palustris (strain ATCC BAA-98 / CGA009)).